Here is a 502-residue protein sequence, read N- to C-terminus: Arginine-specific demethylase JMJ22 (502 aa).

Residues 15–45 (KSKSKRLKLHQHEPESLFPEKEVEEEDEDEG) are disordered. The span at 24-35 (HQHEPESLFPEK) shows a compositional bias: basic and acidic residues. The 47-residue stretch at 80 to 126 (LGNLQILSDELVLDILGLLGANHLGVLATVTKSFYIFANHEPLWRNL) folds into the F-box domain. A JmjC domain is found at 279–439 (EKVPVLDSEY…NVLEFLKKPN (161 aa)). 3 residues coordinate Fe cation: His-324, Asp-326, and His-407.

It belongs to the JARID1 histone demethylase family. Fe(2+) is required as a cofactor. As to expression, expressed in inflorescences, roots and siliques, and, at low levels, in leaves and stems.

Its subcellular location is the nucleus. It carries out the reaction N(omega),N(omega)-dimethyl-L-arginyl-[protein] + 2-oxoglutarate + O2 = N(omega)-methyl-L-arginyl-[protein] + formaldehyde + succinate + CO2. Histone demethylase that demethylates 'Arg-3' (H4R3me) of histone H4 with a specific activity for H4R3me2. Involved in the positive regulation of gene expression. Together with JMJ20, positively regulates seed germination by promoting the removal of repressive histone arginine methylations (e.g. H4R3me2) at GA3ox1 and GA3ox2 to trigger gibberellic acid (GA) biosynthesis. The chain is Arginine-specific demethylase JMJ22 from Arabidopsis thaliana (Mouse-ear cress).